We begin with the raw amino-acid sequence, 202 residues long: Large ribosomal subunit protein uL18 (202 aa).

This sequence belongs to the universal ribosomal protein uL18 family. In terms of assembly, part of the 50S ribosomal subunit. Contacts the 5S and 23S rRNAs.

This is one of the proteins that bind and probably mediate the attachment of the 5S RNA into the large ribosomal subunit, where it forms part of the central protuberance. This is Large ribosomal subunit protein uL18 from Methanopyrus kandleri (strain AV19 / DSM 6324 / JCM 9639 / NBRC 100938).